A 139-amino-acid chain; its full sequence is D-ribose pyranase (139 aa).

Residue H20 is the Proton donor of the active site. Residues D28, H106, and 128–130 contribute to the substrate site; that span reads YAN.

The protein belongs to the RbsD / FucU family. RbsD subfamily. In terms of assembly, homodecamer.

It is found in the cytoplasm. It carries out the reaction beta-D-ribopyranose = beta-D-ribofuranose. It functions in the pathway carbohydrate metabolism; D-ribose degradation; D-ribose 5-phosphate from beta-D-ribopyranose: step 1/2. In terms of biological role, catalyzes the interconversion of beta-pyran and beta-furan forms of D-ribose. This is D-ribose pyranase from Haemophilus influenzae (strain 86-028NP).